The chain runs to 449 residues: Elongation factor 1-alpha (449 aa).

In terms of domain architecture, tr-type G spans 5 to 230 (KVHINIVVIG…DQINEPKRPS (226 aa)). Residues 14-21 (GHVDSGKS) form a G1 region. Position 14 to 21 (14 to 21 (GHVDSGKS)) interacts with GTP. K55 bears the N6,N6-dimethyllysine mark. Positions 70–74 (GITID) are G2. K79 is subject to N6,N6,N6-trimethyllysine. Residues 91 to 94 (DAPG) are G3. GTP-binding positions include 91–95 (DAPGH) and 153–156 (NKMD). The tract at residues 153 to 156 (NKMD) is G4. K187 bears the N6,N6,N6-trimethyllysine mark. The G5 stretch occupies residues 194–196 (SGF). An N6-methyllysine modification is found at K261. Position 289 is a 5-glutamyl glycerylphosphorylethanolamine (E289). K306 is subject to N6,N6,N6-trimethyllysine. E362 carries the post-translational modification 5-glutamyl glycerylphosphorylethanolamine. Position 396 is an N6,N6,N6-trimethyllysine (K396).

Belongs to the TRAFAC class translation factor GTPase superfamily. Classic translation factor GTPase family. EF-Tu/EF-1A subfamily.

It localises to the cytoplasm. This protein promotes the GTP-dependent binding of aminoacyl-tRNA to the A-site of ribosomes during protein biosynthesis. In Daucus carota (Wild carrot), this protein is Elongation factor 1-alpha.